The sequence spans 345 residues: MIKVGIVGGTGYTGVELLRLLATHPEVKLTAITSRKEDGLPVADMFPSLRGRVDLAFSAPEKAKLTECDVVFFATPHGVAMAQAPELLAAGVKVIDLAADFRLQDIAAFEKWYKIPHSCPELLKEAAYGLVELNRDAIRKARIVGNPGCYPTTMQLGLAPLLQAGVIDASHLIADCKSGVSGAGRKAEVATLFSEAGDNFKAYGVSGHRHSPETLERLRLLTKDKVGLLFTPHLVPMIRGMHSTLYARLTKDIDNAALQALFEKAYGNEPFIDVMPFGSHPETRSTRASNMLRIALHRPDDGDTVVVLVVQDNLVKGASGQAVQCMNLMFGLDETAGLMHIPVLP.

Cys149 is an active-site residue.

It belongs to the NAGSA dehydrogenase family. Type 1 subfamily.

The protein resides in the cytoplasm. It catalyses the reaction N-acetyl-L-glutamate 5-semialdehyde + phosphate + NADP(+) = N-acetyl-L-glutamyl 5-phosphate + NADPH + H(+). Its pathway is amino-acid biosynthesis; L-arginine biosynthesis; N(2)-acetyl-L-ornithine from L-glutamate: step 3/4. In terms of biological role, catalyzes the NADPH-dependent reduction of N-acetyl-5-glutamyl phosphate to yield N-acetyl-L-glutamate 5-semialdehyde. This is N-acetyl-gamma-glutamyl-phosphate reductase from Janthinobacterium sp. (strain Marseille) (Minibacterium massiliensis).